A 202-amino-acid polypeptide reads, in one-letter code: Pyridoxal 5'-phosphate synthase subunit PdxT (202 aa).

An L-glutamine-binding site is contributed by 49 to 51 (GES). The active-site Nucleophile is the Cys81. Residues Arg110 and 139–140 (IR) contribute to the L-glutamine site. Active-site charge relay system residues include His182 and Glu184.

The protein belongs to the glutaminase PdxT/SNO family. As to quaternary structure, in the presence of PdxS, forms a dodecamer of heterodimers. Only shows activity in the heterodimer.

It carries out the reaction aldehydo-D-ribose 5-phosphate + D-glyceraldehyde 3-phosphate + L-glutamine = pyridoxal 5'-phosphate + L-glutamate + phosphate + 3 H2O + H(+). It catalyses the reaction L-glutamine + H2O = L-glutamate + NH4(+). It participates in cofactor biosynthesis; pyridoxal 5'-phosphate biosynthesis. Catalyzes the hydrolysis of glutamine to glutamate and ammonia as part of the biosynthesis of pyridoxal 5'-phosphate. The resulting ammonia molecule is channeled to the active site of PdxS. This is Pyridoxal 5'-phosphate synthase subunit PdxT from Rhodococcus opacus (strain B4).